The primary structure comprises 701 residues: Elongation factor G (701 aa).

The region spanning 8–290 (SLYRNIGISA…AVIDYLPAPT (283 aa)) is the tr-type G domain. Residues 17-24 (AHIDAGKT), 88-92 (DTPGH), and 142-145 (NKMD) each bind GTP.

It belongs to the TRAFAC class translation factor GTPase superfamily. Classic translation factor GTPase family. EF-G/EF-2 subfamily.

The protein resides in the cytoplasm. Functionally, catalyzes the GTP-dependent ribosomal translocation step during translation elongation. During this step, the ribosome changes from the pre-translocational (PRE) to the post-translocational (POST) state as the newly formed A-site-bound peptidyl-tRNA and P-site-bound deacylated tRNA move to the P and E sites, respectively. Catalyzes the coordinated movement of the two tRNA molecules, the mRNA and conformational changes in the ribosome. The protein is Elongation factor G of Haemophilus ducreyi (strain 35000HP / ATCC 700724).